The primary structure comprises 66 residues: Small ribosomal subunit protein bS21 (66 aa).

The protein belongs to the bacterial ribosomal protein bS21 family.

The protein is Small ribosomal subunit protein bS21 of Solidesulfovibrio magneticus (strain ATCC 700980 / DSM 13731 / RS-1) (Desulfovibrio magneticus).